A 272-amino-acid polypeptide reads, in one-letter code: Energy-coupling factor transporter ATP-binding protein EcfA1 (272 aa).

The ABC transporter domain maps to 2-237; that stretch reads IKVSDVCFSY…KNIIEKAKID (236 aa). Position 37–44 (37–44) interacts with ATP; sequence GHNGSGKS.

This sequence belongs to the ABC transporter superfamily. Energy-coupling factor EcfA family. As to quaternary structure, forms a stable energy-coupling factor (ECF) transporter complex composed of 2 membrane-embedded substrate-binding proteins (S component), 2 ATP-binding proteins (A component) and 2 transmembrane proteins (T component).

The protein resides in the cell membrane. In terms of biological role, ATP-binding (A) component of a common energy-coupling factor (ECF) ABC-transporter complex. Unlike classic ABC transporters this ECF transporter provides the energy necessary to transport a number of different substrates. The sequence is that of Energy-coupling factor transporter ATP-binding protein EcfA1 from Mesomycoplasma hyopneumoniae (strain 7448) (Mycoplasma hyopneumoniae).